Reading from the N-terminus, the 156-residue chain is Small ribosomal subunit protein uS7 (156 aa).

It belongs to the universal ribosomal protein uS7 family. Part of the 30S ribosomal subunit. Contacts proteins S9 and S11.

In terms of biological role, one of the primary rRNA binding proteins, it binds directly to 16S rRNA where it nucleates assembly of the head domain of the 30S subunit. Is located at the subunit interface close to the decoding center, probably blocks exit of the E-site tRNA. In Acaryochloris marina (strain MBIC 11017), this protein is Small ribosomal subunit protein uS7.